Here is a 467-residue protein sequence, read N- to C-terminus: Rhamnulokinase (467 aa).

11 to 15 lines the ATP pocket; that stretch reads ASSGR. Substrate is bound by residues Ala78 and 235 to 237; that span reads HDT. The Proton acceptor role is filled by Asp236. Thr257 contacts ATP. Position 294 (Asn294) interacts with substrate. Gln302 contacts ATP. Cys351 and Cys368 are joined by a disulfide. Residue Gly400 coordinates ATP.

Belongs to the rhamnulokinase family. It depends on Mg(2+) as a cofactor.

It carries out the reaction L-rhamnulose + ATP = L-rhamnulose 1-phosphate + ADP + H(+). It participates in carbohydrate degradation; L-rhamnose degradation; glycerone phosphate from L-rhamnose: step 2/3. In terms of biological role, involved in the catabolism of L-rhamnose (6-deoxy-L-mannose). Catalyzes the transfer of the gamma-phosphate group from ATP to the 1-hydroxyl group of L-rhamnulose to yield L-rhamnulose 1-phosphate. In Halalkalibacterium halodurans (strain ATCC BAA-125 / DSM 18197 / FERM 7344 / JCM 9153 / C-125) (Bacillus halodurans), this protein is Rhamnulokinase.